The chain runs to 386 residues: D-amino-acid oxidase (386 aa).

FAD contacts are provided by glycine 14, glycine 15, valine 16, valine 17, glutamate 39, arginine 40, alanine 51, glycine 52, and glycine 53. The segment at 109 to 138 (SSSPPHPLLPPWVDPSASAAPPRELGTPDT) is disordered. Over residues 112 to 121 (PPHPLLPPWV) the composition is skewed to pro residues. FAD-binding residues include arginine 174, valine 175, and alanine 176. 3 residues coordinate D-serine: tyrosine 253, tyrosine 261, and lysine 332. Positions 261 and 332 each coordinate D-proline. 5 residues coordinate FAD: lysine 332, glycine 344, isoleucine 345, glycine 362, and alanine 364. A D-dopa-binding site is contributed by lysine 332. D-serine is bound at residue glycine 362. Glycine 362 provides a ligand contact to D-proline. Glycine 362 is a D-dopa binding site.

The protein belongs to the DAMOX/DASOX family.

The catalysed reaction is a D-alpha-amino acid + O2 + H2O = a 2-oxocarboxylate + H2O2 + NH4(+). It carries out the reaction D-alanine + O2 + H2O = pyruvate + H2O2 + NH4(+). It catalyses the reaction D-aspartate + O2 + H2O = oxaloacetate + H2O2 + NH4(+). Its function is as follows. Catalyzes the oxidative deamination of D-amino acids with broad substrate specificity. Enables the organism to utilize D-amino acids as a source of nutrients. The sequence is that of D-amino-acid oxidase from Zea mays (Maize).